Consider the following 226-residue polypeptide: Deoxyribose-phosphate aldolase (226 aa).

The Proton donor/acceptor role is filled by Glu-96. The active-site Schiff-base intermediate with acetaldehyde is Lys-157. Residue Lys-185 is the Proton donor/acceptor of the active site.

Belongs to the DeoC/FbaB aldolase family. DeoC type 1 subfamily.

The protein localises to the cytoplasm. The enzyme catalyses 2-deoxy-D-ribose 5-phosphate = D-glyceraldehyde 3-phosphate + acetaldehyde. It participates in carbohydrate degradation; 2-deoxy-D-ribose 1-phosphate degradation; D-glyceraldehyde 3-phosphate and acetaldehyde from 2-deoxy-alpha-D-ribose 1-phosphate: step 2/2. In terms of biological role, catalyzes a reversible aldol reaction between acetaldehyde and D-glyceraldehyde 3-phosphate to generate 2-deoxy-D-ribose 5-phosphate. This is Deoxyribose-phosphate aldolase from Gloeobacter violaceus (strain ATCC 29082 / PCC 7421).